Here is a 166-residue protein sequence, read N- to C-terminus: 3-dehydroquinate dehydratase (166 aa).

Tyr-22 serves as the catalytic Proton acceptor. Residues Asn-73, His-79, and Asp-86 each coordinate substrate. The active-site Proton donor is the His-99. Substrate contacts are provided by residues 100–101 (IT) and Arg-110.

It belongs to the type-II 3-dehydroquinase family. Homododecamer.

The enzyme catalyses 3-dehydroquinate = 3-dehydroshikimate + H2O. The protein operates within metabolic intermediate biosynthesis; chorismate biosynthesis; chorismate from D-erythrose 4-phosphate and phosphoenolpyruvate: step 3/7. Catalyzes a trans-dehydration via an enolate intermediate. The protein is 3-dehydroquinate dehydratase of Wolinella succinogenes (strain ATCC 29543 / DSM 1740 / CCUG 13145 / JCM 31913 / LMG 7466 / NCTC 11488 / FDC 602W) (Vibrio succinogenes).